The sequence spans 64 residues: Translation machinery-associated protein 7 homolog (64 aa).

Positions 1 to 64 (MSGREGGKKK…QGGIKKSGKK (64 aa)) are disordered. A coiled-coil region spans residues 21–50 (EMDEDTAAFKAKQKEQQKALEAAKQKATKG). Over residues 32–44 (KQKEQQKALEAAK) the composition is skewed to basic and acidic residues.

It belongs to the TMA7 family.

The polypeptide is Translation machinery-associated protein 7 homolog (Anopheles gambiae (African malaria mosquito)).